A 411-amino-acid polypeptide reads, in one-letter code: Tyrosine--tRNA ligase (411 aa).

Tyr34 provides a ligand contact to L-tyrosine. Residues 39 to 48 (CTATSLHIGS) carry the 'HIGH' region motif. Residues Tyr171 and Gln175 each coordinate L-tyrosine. The 'KMSKS' region signature appears at 231–235 (KMGKT). Lys234 is an ATP binding site. In terms of domain architecture, S4 RNA-binding spans 345–411 (ISAYNLFYNA…GKKRHILVKV (67 aa)).

This sequence belongs to the class-I aminoacyl-tRNA synthetase family. TyrS type 1 subfamily. Homodimer.

It localises to the cytoplasm. The catalysed reaction is tRNA(Tyr) + L-tyrosine + ATP = L-tyrosyl-tRNA(Tyr) + AMP + diphosphate + H(+). Catalyzes the attachment of tyrosine to tRNA(Tyr) in a two-step reaction: tyrosine is first activated by ATP to form Tyr-AMP and then transferred to the acceptor end of tRNA(Tyr). The protein is Tyrosine--tRNA ligase of Rickettsia prowazekii (strain Madrid E).